Here is a 278-residue protein sequence, read N- to C-terminus: Adenosylcobinamide-GDP ribazoletransferase (278 aa).

7 helical membrane passes run 31 to 51 (AMALAPFVGLALGLLAGSAVF), 66 to 86 (TLLPAVVGVTVLALVTRGLHL), 115 to 135 (TIGAFGAIIVLFVVLLQVGAL), 148 to 168 (ILVAAMTSRLAATLACTGAVP), 187 to 207 (DAALSFLAVCAVAALAGLLDF), 215 to 237 (ALRAVLAVWVGTGVSFLLRRYLL), and 247 to 267 (ILGGLIEITAAATLLVMAMTI).

The protein belongs to the CobS family. Mg(2+) serves as cofactor.

It is found in the cell membrane. The enzyme catalyses alpha-ribazole + adenosylcob(III)inamide-GDP = adenosylcob(III)alamin + GMP + H(+). It carries out the reaction alpha-ribazole 5'-phosphate + adenosylcob(III)inamide-GDP = adenosylcob(III)alamin 5'-phosphate + GMP + H(+). It functions in the pathway cofactor biosynthesis; adenosylcobalamin biosynthesis; adenosylcobalamin from cob(II)yrinate a,c-diamide: step 7/7. Functionally, joins adenosylcobinamide-GDP and alpha-ribazole to generate adenosylcobalamin (Ado-cobalamin). Also synthesizes adenosylcobalamin 5'-phosphate from adenosylcobinamide-GDP and alpha-ribazole 5'-phosphate. This is Adenosylcobinamide-GDP ribazoletransferase from Frankia casuarinae (strain DSM 45818 / CECT 9043 / HFP020203 / CcI3).